A 104-amino-acid polypeptide reads, in one-letter code: Large ribosomal subunit protein bL21 (104 aa).

Belongs to the bacterial ribosomal protein bL21 family. In terms of assembly, part of the 50S ribosomal subunit. Contacts protein L20.

In terms of biological role, this protein binds to 23S rRNA in the presence of protein L20. This chain is Large ribosomal subunit protein bL21, found in Kosmotoga olearia (strain ATCC BAA-1733 / DSM 21960 / TBF 19.5.1).